The sequence spans 267 residues: Levodione reductase (267 aa).

17 to 42 contacts NAD(+); it reads LITGGGSGLGRATAVRLAAEGAKLSL. Residue serine 152 participates in substrate binding. Tyrosine 165 serves as the catalytic Proton acceptor.

Belongs to the short-chain dehydrogenases/reductases (SDR) family.

The catalysed reaction is (4R)-hydroxy-(6R)-2,2,6-trimethylcyclohexanone + NAD(+) = (6R)-2,2,6-trimethyl-1,4-cyclohexanedione + NADH + H(+). Strongly activated by monovalent cations, such as K(+), Na(+), and NH4(+). In terms of biological role, catalyzes the regio- and stereoselective reversible NAD-dependent reduction of (6R)-2,2,6-trimethyl-1,4-cyclohexanedione (levodione) to (4R,6R)-4-hydroxy-2,2,6-trimethylcyclohexanone (actinol). This chain is Levodione reductase (lvr), found in Leifsonia aquatica (Corynebacterium aquaticum).